The sequence spans 283 residues: Elongation factor Ts (283 aa).

Positions 80 to 83 (TDFV) are involved in Mg(2+) ion dislocation from EF-Tu.

Belongs to the EF-Ts family.

The protein resides in the cytoplasm. Its function is as follows. Associates with the EF-Tu.GDP complex and induces the exchange of GDP to GTP. It remains bound to the aminoacyl-tRNA.EF-Tu.GTP complex up to the GTP hydrolysis stage on the ribosome. The sequence is that of Elongation factor Ts from Pectobacterium atrosepticum (strain SCRI 1043 / ATCC BAA-672) (Erwinia carotovora subsp. atroseptica).